The chain runs to 216 residues: ATP phosphoribosyltransferase (216 aa).

The protein belongs to the ATP phosphoribosyltransferase family. Short subfamily. Heteromultimer composed of HisG and HisZ subunits.

The protein localises to the cytoplasm. The catalysed reaction is 1-(5-phospho-beta-D-ribosyl)-ATP + diphosphate = 5-phospho-alpha-D-ribose 1-diphosphate + ATP. The protein operates within amino-acid biosynthesis; L-histidine biosynthesis; L-histidine from 5-phospho-alpha-D-ribose 1-diphosphate: step 1/9. Catalyzes the condensation of ATP and 5-phosphoribose 1-diphosphate to form N'-(5'-phosphoribosyl)-ATP (PR-ATP). Has a crucial role in the pathway because the rate of histidine biosynthesis seems to be controlled primarily by regulation of HisG enzymatic activity. The chain is ATP phosphoribosyltransferase from Rubrobacter xylanophilus (strain DSM 9941 / JCM 11954 / NBRC 16129 / PRD-1).